A 307-amino-acid polypeptide reads, in one-letter code: Urease accessory protein UreD (307 aa).

Belongs to the UreD family. UreD, UreF and UreG form a complex that acts as a GTP-hydrolysis-dependent molecular chaperone, activating the urease apoprotein by helping to assemble the nickel containing metallocenter of UreC. The UreE protein probably delivers the nickel.

Its subcellular location is the cytoplasm. Functionally, required for maturation of urease via the functional incorporation of the urease nickel metallocenter. In Prochlorococcus marinus (strain NATL2A), this protein is Urease accessory protein UreD.